A 503-amino-acid chain; its full sequence is Probable cytosol aminopeptidase (503 aa).

Residues K274 and D279 each coordinate Mn(2+). K286 is an active-site residue. Residues D297, D356, and E358 each coordinate Mn(2+). R360 is an active-site residue.

Belongs to the peptidase M17 family. The cofactor is Mn(2+).

Its subcellular location is the cytoplasm. It catalyses the reaction Release of an N-terminal amino acid, Xaa-|-Yaa-, in which Xaa is preferably Leu, but may be other amino acids including Pro although not Arg or Lys, and Yaa may be Pro. Amino acid amides and methyl esters are also readily hydrolyzed, but rates on arylamides are exceedingly low.. It carries out the reaction Release of an N-terminal amino acid, preferentially leucine, but not glutamic or aspartic acids.. Its function is as follows. Presumably involved in the processing and regular turnover of intracellular proteins. Catalyzes the removal of unsubstituted N-terminal amino acids from various peptides. The polypeptide is Probable cytosol aminopeptidase (Burkholderia mallei (strain SAVP1)).